Here is a 436-residue protein sequence, read N- to C-terminus: Carboxypeptidase A5 (436 aa).

The first 33 residues, 1–33 (MQGTPAGGTSPGPSPMDRQTLLVFSLILAAALG), serve as a signal peptide directing secretion. Residues 34-126 (QMNFTGDQVL…EREAMAKSRR (93 aa)) constitute a propeptide, activation peptide. A Peptidase M14 domain is found at 138–431 (SYHTLEEISS…MALRTIMEHT (294 aa)). His196 and Glu199 together coordinate Zn(2+). Substrate-binding positions include 196 to 199 (HSRE), Arg254, and 271 to 272 (NR). A disulfide bond links Cys265 and Cys288. His323 serves as a coordination point for Zn(2+). Substrate-binding positions include 324–325 (SY) and Tyr375. Glu397 acts as the Proton donor/acceptor in catalysis.

The protein belongs to the peptidase M14 family. Zn(2+) serves as cofactor.

The protein resides in the secreted. This is Carboxypeptidase A5 (CPA5) from Macaca fascicularis (Crab-eating macaque).